We begin with the raw amino-acid sequence, 372 residues long: Inner membrane protein YbiR (372 aa).

Over 1-13 (MSLPFLRTLQGDR) the chain is Periplasmic. A run of 2 helical transmembrane segments spans residues 14–34 (FFQL…FAPK) and 35–55 (SWPA…MLLT). The Periplasmic segment spans residues 56 to 85 (KGVELSGYFDVLGRKMVRRFATERRLAMFM). A helical membrane pass occupies residues 86-106 (VLAAALLSTFLTNDVALFIVV). Topologically, residues 107-122 (PLTITLKRLCEIPVNR) are cytoplasmic. The helical transmembrane segment at 123-143 (LIIFEALAVNAGSLLTPIGNP) threads the bilayer. The Periplasmic portion of the chain corresponds to 144–155 (QNILIWGRSGLS). A helical membrane pass occupies residues 156 to 176 (FAGFIAQMAPLAGAMMLTLLL). The Cytoplasmic segment spans residues 177–208 (LCWCCFPGKAMQYHTGVQTPEWKPRLVWSCLG). The chain crosses the membrane as a helical span at residues 209–229 (LYIVFLTALEFKQELWGLVIV). Residues 230–247 (AAGFALLARRVVLSVDWT) lie on the Periplasmic side of the membrane. Residues 248–268 (LLLVFMAMFIDVHLLTQLPAL) traverse the membrane as a helical segment. The Cytoplasmic portion of the chain corresponds to 269 to 283 (QGVLGNVSHLSEPGL). Residues 284–304 (WLTAIGLSQVISNVPSTILLL) form a helical membrane-spanning segment. The Periplasmic segment spans residues 305–309 (NYVPP). A helical transmembrane segment spans residues 310–330 (SLLLVWAVNVGGFGLLPGSLA). The Cytoplasmic portion of the chain corresponds to 331-348 (NLIALRMANDRRIWWRFH). A helical transmembrane segment spans residues 349–369 (LYSIPMLLWAALVGYVLLVIL). Residues 370–372 (PAN) are Periplasmic-facing.

The protein belongs to the CitM (TC 2.A.11) transporter family.

Its subcellular location is the cell inner membrane. This is Inner membrane protein YbiR (ybiR) from Escherichia coli (strain K12).